A 190-amino-acid polypeptide reads, in one-letter code: MQSLMQAPVLIALGLLFAAPAQAHLKKLGSFSWDNCDEGKDPAVIRSLTLEPDPILIPGNVTVSVVGSTSVLLSSPLKVELVLEKEVAGLWIKIPCTDYIGSCTFEDFCDVLDMLIPTGEPCPEPLRTYGLPCHCPFKEGTYSLPKSEFVVPHLELPSWLTTGNYRIESILSNRGKRLGCIKIAASLKGV.

The signal sequence occupies residues 1–23 (MQSLMQAPVLIALGLLFAAPAQA). 4 disulfides stabilise this stretch: C36–C180, C96–C103, C109–C135, and C122–C133. Residue N60 is glycosylated (N-linked (GlcNAc...) asparagine).

Its subcellular location is the lysosome. It carries out the reaction cholesterol(in) = cholesterol(out). In terms of biological role, the large binding pocket can accommodate several single chain phospholipids and fatty acids, GM2A also exhibits some calcium-independent phospholipase activity. Binds gangliosides and stimulates ganglioside GM2 degradation. It stimulates only the breakdown of ganglioside GM2 and glycolipid GA2 by beta-hexosaminidase A. It extracts single GM2 molecules from membranes and presents them in soluble form to beta-hexosaminidase A for cleavage of N-acetyl-D-galactosamine and conversion to GM3. Has cholesterol transfer activity. The chain is Ganglioside GM2 activator (GM2A) from Macaca fascicularis (Crab-eating macaque).